The following is a 1364-amino-acid chain: Kinectin (1364 aa).

At 1–6 (MEFYES) the chain is on the cytoplasmic side. The chain crosses the membrane as a helical; Signal-anchor for type II membrane protein span at residues 7 to 29 (TYFIILIPSVVITVIFLFFWLFM). Residues 30 to 1364 (KETLYDEVLA…KGREHYQLVE (1335 aa)) lie on the Lumenal side of the membrane. 4 stretches are compositionally biased toward basic and acidic residues: residues 46–56 (KFPPTKSDKKK), 73–86 (HESDSESTPRDFKL), 121–135 (QKAAQDDHVTKESEG), and 170–179 (QKNDDQDTKT). The interval 46 to 207 (KFPPTKSDKK…VKQENVSGKK (162 aa)) is disordered. 10 N-linked (GlcNAc...) asparagine glycosylation sites follow: Asn202, Asn267, Asn623, Asn638, Asn704, Asn775, Asn976, Asn1061, Asn1088, and Asn1094. Positions 315–1085 (KASKAESAAA…VETRELLQKL (771 aa)) form a coiled coil. A coiled-coil region spans residues 1116–1306 (SGSEDIKVME…ASLEREIGKV (191 aa)).

Belongs to the kinectin family. In terms of assembly, parallel homodimers formed between the membrane-bound and the cytosolic form, and also between 2 cytosolic forms. Post-translationally, both the membrane and cytoplasmic forms seem to be myristoylated.

The protein resides in the endoplasmic reticulum membrane. Its function is as follows. Receptor for kinesin thus involved in kinesin-driven vesicle motility. The chain is Kinectin (KTN1) from Gallus gallus (Chicken).